Consider the following 122-residue polypeptide: Ribosome-binding factor A (122 aa).

This sequence belongs to the RbfA family. As to quaternary structure, monomer. Binds 30S ribosomal subunits, but not 50S ribosomal subunits or 70S ribosomes.

It localises to the cytoplasm. One of several proteins that assist in the late maturation steps of the functional core of the 30S ribosomal subunit. Associates with free 30S ribosomal subunits (but not with 30S subunits that are part of 70S ribosomes or polysomes). Required for efficient processing of 16S rRNA. May interact with the 5'-terminal helix region of 16S rRNA. In Polynucleobacter necessarius subsp. necessarius (strain STIR1), this protein is Ribosome-binding factor A.